We begin with the raw amino-acid sequence, 97 residues long: Large ribosomal subunit protein bL27 (97 aa).

Residues 1 to 12 constitute a propeptide that is removed on maturation; it reads MLKMNLANLQLF. Positions 14–37 are disordered; that stretch reads HKKGGGSTSNGRDSQAKRLGAKAA.

Belongs to the bacterial ribosomal protein bL27 family. In terms of processing, the N-terminus is cleaved by ribosomal processing cysteine protease Prp.

The sequence is that of Large ribosomal subunit protein bL27 from Streptococcus gordonii (strain Challis / ATCC 35105 / BCRC 15272 / CH1 / DL1 / V288).